The primary structure comprises 256 residues: Imidazole glycerol phosphate synthase subunit HisF (256 aa).

Residues aspartate 12 and aspartate 131 contribute to the active site.

This sequence belongs to the HisA/HisF family. In terms of assembly, heterodimer of HisH and HisF.

The protein localises to the cytoplasm. It catalyses the reaction 5-[(5-phospho-1-deoxy-D-ribulos-1-ylimino)methylamino]-1-(5-phospho-beta-D-ribosyl)imidazole-4-carboxamide + L-glutamine = D-erythro-1-(imidazol-4-yl)glycerol 3-phosphate + 5-amino-1-(5-phospho-beta-D-ribosyl)imidazole-4-carboxamide + L-glutamate + H(+). It participates in amino-acid biosynthesis; L-histidine biosynthesis; L-histidine from 5-phospho-alpha-D-ribose 1-diphosphate: step 5/9. In terms of biological role, IGPS catalyzes the conversion of PRFAR and glutamine to IGP, AICAR and glutamate. The HisF subunit catalyzes the cyclization activity that produces IGP and AICAR from PRFAR using the ammonia provided by the HisH subunit. The protein is Imidazole glycerol phosphate synthase subunit HisF of Azotobacter vinelandii (strain DJ / ATCC BAA-1303).